The primary structure comprises 67 residues: Light-harvesting protein B-870 alpha chain (67 aa).

Residues 1–12 (MWRIWRLFDPMR) are Cytoplasmic-facing. Residues 13-33 (AMVAQAVFLLGLAVLIHLMLL) form a helical membrane-spanning segment. An a bacteriochlorophyll-binding site is contributed by H29. Topologically, residues 34-67 (GTNKYNWLDGAKKAPVATAVAPVPAEVTSLAQAK) are periplasmic.

Belongs to the antenna complex alpha subunit family. As to quaternary structure, an alpha/beta heterodimer. The core complex is formed by different alpha and beta chains, binding bacteriochlorophyll molecules, and arranged most probably in tetrameric structures disposed around the reaction center. The non-pigmented gamma chains may constitute additional components.

Its subcellular location is the cell inner membrane. Antenna complexes are light-harvesting systems, which transfer the excitation energy to the reaction centers. This chain is Light-harvesting protein B-870 alpha chain (pufA), found in Rubrivivax gelatinosus (strain NBRC 100245 / IL144).